The chain runs to 273 residues: Diaminopimelate epimerase (273 aa).

2 residues coordinate substrate: N11 and N60. The active-site Proton donor is C69. Substrate contacts are provided by residues 70–71 (GN), N181, and 199–200 (ER). C209 functions as the Proton acceptor in the catalytic mechanism. Residue 210–211 (GT) coordinates substrate.

This sequence belongs to the diaminopimelate epimerase family. Homodimer.

The protein localises to the cytoplasm. It carries out the reaction (2S,6S)-2,6-diaminopimelate = meso-2,6-diaminopimelate. It participates in amino-acid biosynthesis; L-lysine biosynthesis via DAP pathway; DL-2,6-diaminopimelate from LL-2,6-diaminopimelate: step 1/1. Its function is as follows. Catalyzes the stereoinversion of LL-2,6-diaminopimelate (L,L-DAP) to meso-diaminopimelate (meso-DAP), a precursor of L-lysine and an essential component of the bacterial peptidoglycan. The sequence is that of Diaminopimelate epimerase from Helicobacter pylori (strain Shi470).